Here is a 102-residue protein sequence, read N- to C-terminus: MSRTENIEHVEESVESELKQPSMYKVILNNDDYTPMDFVIEILQLFFKKDEQQATEIMLAIHHKGKGICGIYPFGIAETKVAQVNQFARQNQHPLLCSLEEA.

It belongs to the ClpS family. Binds to the N-terminal domain of the chaperone ClpA.

Involved in the modulation of the specificity of the ClpAP-mediated ATP-dependent protein degradation. In Shewanella pealeana (strain ATCC 700345 / ANG-SQ1), this protein is ATP-dependent Clp protease adapter protein ClpS.